The following is a 187-amino-acid chain: DNA-directed RNA polymerase subunit Rpo7 (187 aa).

The S1 motif domain occupies tyrosine 82 to arginine 166.

The protein belongs to the eukaryotic RPB7/RPC8 RNA polymerase subunit family. Part of the RNA polymerase complex. Forms a stalk with Rpo4 that extends from the main structure.

It localises to the cytoplasm. It carries out the reaction RNA(n) + a ribonucleoside 5'-triphosphate = RNA(n+1) + diphosphate. DNA-dependent RNA polymerase (RNAP) catalyzes the transcription of DNA into RNA using the four ribonucleoside triphosphates as substrates. The protein is DNA-directed RNA polymerase subunit Rpo7 of Methanocaldococcus jannaschii (strain ATCC 43067 / DSM 2661 / JAL-1 / JCM 10045 / NBRC 100440) (Methanococcus jannaschii).